A 525-amino-acid chain; its full sequence is Chromosomal replication initiator protein DnaA (525 aa).

The tract at residues 1 to 71 (MNDFWQHCSA…ADLAREFWNT (71 aa)) is domain I, interacts with DnaA modulators. A domain II region spans residues 71–188 (TPIEVQFVLD…GEADSMYERS (118 aa)). Residues 160–182 (AAAGRRTWRPGPGAAPANGGEAD) form a disordered region. Residues 169–181 (PGPGAAPANGGEA) are compositionally biased toward low complexity. Residues 189-405 (KLNPVLTFDN…GALRKILAYS (217 aa)) are domain III, AAA+ region. Positions 233, 235, 236, and 237 each coordinate ATP. The interval 406 to 525 (KFHGREISIE…LHVLEQTLKG (120 aa)) is domain IV, binds dsDNA.

Belongs to the DnaA family. Oligomerizes as a right-handed, spiral filament on DNA at oriC.

The protein localises to the cytoplasm. Functionally, plays an essential role in the initiation and regulation of chromosomal replication. ATP-DnaA binds to the origin of replication (oriC) to initiate formation of the DNA replication initiation complex once per cell cycle. Binds the DnaA box (a 9 base pair repeat at the origin) and separates the double-stranded (ds)DNA. Forms a right-handed helical filament on oriC DNA; dsDNA binds to the exterior of the filament while single-stranded (ss)DNA is stabiized in the filament's interior. The ATP-DnaA-oriC complex binds and stabilizes one strand of the AT-rich DNA unwinding element (DUE), permitting loading of DNA polymerase. After initiation quickly degrades to an ADP-DnaA complex that is not apt for DNA replication. Binds acidic phospholipids. The sequence is that of Chromosomal replication initiator protein DnaA from Burkholderia cenocepacia (strain ATCC BAA-245 / DSM 16553 / LMG 16656 / NCTC 13227 / J2315 / CF5610) (Burkholderia cepacia (strain J2315)).